The following is a 337-amino-acid chain: CMRF35-like molecule 1 (337 aa).

An N-terminal signal peptide occupies residues 1-19 (MHLSLLVPFLFWITGCCTA). The region spanning 20 to 125 (EDPVTGPEEV…LDPMFKVTVN (106 aa)) is the Ig-like V-type domain. At 20–193 (EDPVTGPEEV…GVGDGFLDLS (174 aa)) the chain is on the extracellular side. Residues 39–45 (VQCRYTS) are plays an important role in murine norovirus (MNV) binding. Intrachain disulfides connect C41-C109 and C55-C63. A helical transmembrane segment spans residues 194-214 (VLLPVISAVLLLLLLVASLFA). Residues 215 to 337 (WRMVRRQKKA…IRRPLPAAMP (123 aa)) are Cytoplasmic-facing. Disordered regions lie at residues 248–270 (QPRTSPGSSWKKGSSMSSSGKDH) and 318–337 (LEEETTEYSSIRRPLPAAMP). A compositionally biased stretch (low complexity) spans 252–266 (SPGSSWKKGSSMSSS).

This sequence belongs to the CD300 family. In terms of assembly, interacts with PTPN6/SHP-1 in a tyrosine phosphorylation dependent manner. Interacts with IL4R. Post-translationally, phosphorylated on tyrosine. Expressed in myeloid cells. Present on the surface of macrophages (at protein level). Highly expressed by alveolar, splenic macrophages and bone marrow-derived dendritic cells. Expression is increased following aeroallergen challenge in macrophages, mast cells, and eosinophils.

It localises to the cell membrane. Functionally, acts as an inhibitory receptor for myeloid cells and mast cells. Positively regulates the phagocytosis of apoptotic cells (efferocytosis) via phosphatidylserine (PS) recognition; recognizes and binds PS as a ligand which is expressed on the surface of apoptotic cells. Plays an important role in the maintenance of immune homeostasis, by promoting macrophage-mediated efferocytosis and by inhibiting dendritic cell-mediated efferocytosis. Negatively regulates Fc epsilon receptor-dependent mast cell activation and allergic responses via binding to ceramide which acts as a ligand. May act as a coreceptor for interleukin 4 (IL-4). Associates with and regulates IL-4 receptor alpha-mediated responses by augmenting IL-4- and IL-13-induced signaling. Negatively regulates the Toll-like receptor (TLR) signaling mediated by MYD88 and TRIF through activation of PTPN6/SHP-1 and PTPN11/SHP-2. Inhibits osteoclast formation. Induces macrophage cell death upon engagement. Its function is as follows. (Microbial infection) Acts as a functional receptor for murine norovirus (MNV). Mediates binding to the cell surface and is both necessary and sufficient for viral entry and replication. This interaction requires Mg(2+) and Ca(2+) and is enhanced by bile acids. Primary determinant of MNV species tropism and is sufficient to render cells permissive to infection by MNV. Can render nonmurine mammalian cells susceptible to MNV infection. The sequence is that of CMRF35-like molecule 1 (Cd300lf) from Mus musculus (Mouse).